The following is a 114-amino-acid chain: Nucleoid-associated protein Amet_4780 (114 aa).

The interval 23–42 is disordered; that stretch reads QKMQKDMEKTQAALEEKEVE. Residues 25–42 are compositionally biased toward basic and acidic residues; the sequence is MQKDMEKTQAALEEKEVE.

This sequence belongs to the YbaB/EbfC family. In terms of assembly, homodimer.

It localises to the cytoplasm. The protein localises to the nucleoid. Functionally, binds to DNA and alters its conformation. May be involved in regulation of gene expression, nucleoid organization and DNA protection. This is Nucleoid-associated protein Amet_4780 from Alkaliphilus metalliredigens (strain QYMF).